We begin with the raw amino-acid sequence, 642 residues long: 1-deoxy-D-xylulose-5-phosphate synthase 2 (642 aa).

Thiamine diphosphate-binding positions include His79 and 120 to 122 (AHS). Asp155 contacts Mg(2+). Residues 156-157 (GS), Asn184, Tyr293, and Glu375 contribute to the thiamine diphosphate site. A Mg(2+)-binding site is contributed by Asn184.

It belongs to the transketolase family. DXPS subfamily. Homodimer. Mg(2+) serves as cofactor. It depends on thiamine diphosphate as a cofactor.

The catalysed reaction is D-glyceraldehyde 3-phosphate + pyruvate + H(+) = 1-deoxy-D-xylulose 5-phosphate + CO2. Its pathway is metabolic intermediate biosynthesis; 1-deoxy-D-xylulose 5-phosphate biosynthesis; 1-deoxy-D-xylulose 5-phosphate from D-glyceraldehyde 3-phosphate and pyruvate: step 1/1. In terms of biological role, catalyzes the acyloin condensation reaction between C atoms 2 and 3 of pyruvate and glyceraldehyde 3-phosphate to yield 1-deoxy-D-xylulose-5-phosphate (DXP). The protein is 1-deoxy-D-xylulose-5-phosphate synthase 2 of Roseobacter denitrificans (strain ATCC 33942 / OCh 114) (Erythrobacter sp. (strain OCh 114)).